Here is a 247-residue protein sequence, read N- to C-terminus: ATP synthase subunit a, chloroplastic (247 aa).

5 consecutive transmembrane segments (helical) span residues 38 to 58 (QVLI…TIAV), 95 to 115 (VPFI…GALL), 134 to 154 (INTT…AGFT), 199 to 219 (LVVV…VMFL), and 220 to 240 (GLFT…AYIG).

Belongs to the ATPase A chain family. F-type ATPases have 2 components, CF(1) - the catalytic core - and CF(0) - the membrane proton channel. CF(1) has five subunits: alpha(3), beta(3), gamma(1), delta(1), epsilon(1). CF(0) has four main subunits: a, b, b' and c.

Its subcellular location is the plastid. It is found in the chloroplast thylakoid membrane. Its function is as follows. Key component of the proton channel; it plays a direct role in the translocation of protons across the membrane. This is ATP synthase subunit a, chloroplastic from Liriodendron tulipifera (Tuliptree).